The primary structure comprises 265 residues: Undecaprenyl-diphosphatase (265 aa).

Helical transmembrane passes span 38–58 (RSDF…CLAL), 75–95 (RDYV…GLIV), 108–128 (PVAW…HVAG), 135–155 (VVTW…GVFP), 181–201 (FVFM…LLEM), 215–235 (VAVA…WLLS), and 244–264 (VFAV…PAAA).

This sequence belongs to the UppP family.

The protein resides in the cell inner membrane. The enzyme catalyses di-trans,octa-cis-undecaprenyl diphosphate + H2O = di-trans,octa-cis-undecaprenyl phosphate + phosphate + H(+). In terms of biological role, catalyzes the dephosphorylation of undecaprenyl diphosphate (UPP). Confers resistance to bacitracin. This is Undecaprenyl-diphosphatase from Xanthomonas oryzae pv. oryzae (strain MAFF 311018).